Reading from the N-terminus, the 387-residue chain is 3-ketoacyl-CoA thiolase (387 aa).

Cys91 acts as the Acyl-thioester intermediate in catalysis. Catalysis depends on proton acceptor residues His343 and Cys373.

It belongs to the thiolase-like superfamily. Thiolase family. As to quaternary structure, heterotetramer of two alpha chains (FadB) and two beta chains (FadA).

Its subcellular location is the cytoplasm. The enzyme catalyses an acyl-CoA + acetyl-CoA = a 3-oxoacyl-CoA + CoA. The protein operates within lipid metabolism; fatty acid beta-oxidation. Its function is as follows. Catalyzes the final step of fatty acid oxidation in which acetyl-CoA is released and the CoA ester of a fatty acid two carbons shorter is formed. The polypeptide is 3-ketoacyl-CoA thiolase (Yersinia pseudotuberculosis serotype O:1b (strain IP 31758)).